Here is a 176-residue protein sequence, read N- to C-terminus: Transcriptional repressor NrdR (176 aa).

A zinc finger spans residues 3-34; it reads CPYCGSLETQVKDSRPTDDASAIRRRRVCPDC. The ATP-cone domain occupies 49–139; it reads LTVLKKSGRR…VYRNFREARD (91 aa). Residues 147–176 form a disordered region; sequence LDGAAQPEAPSKDDGGTDEPPAKTRAPTRA.

It belongs to the NrdR family. Requires Zn(2+) as cofactor.

Its function is as follows. Negatively regulates transcription of bacterial ribonucleotide reductase nrd genes and operons by binding to NrdR-boxes. This chain is Transcriptional repressor NrdR, found in Methylocella silvestris (strain DSM 15510 / CIP 108128 / LMG 27833 / NCIMB 13906 / BL2).